The chain runs to 170 residues: dCTP pyrophosphatase 1 (170 aa).

Residues 1 to 27 (MSVAGGEIRGDTGGEDTAAPGRFSFSP) form a disordered region. Residue S2 is modified to N-acetylserine. S2 is modified (phosphoserine). T12 bears the Phosphothreonine mark. Residues H38 and 47 to 51 (WEQFH) each bind substrate. Mg(2+) contacts are provided by E63 and E66. W73 is a binding site for substrate. S85 is subject to Phosphoserine. Positions 95 and 98 each coordinate Mg(2+). Y102 lines the substrate pocket. The interval 147–170 (GAISEDQAVGPADIPCDSTGQTST) is disordered.

Homotetramer. It depends on Mg(2+) as a cofactor.

The protein localises to the mitochondrion. The protein resides in the nucleus. It localises to the cytoplasm. Its subcellular location is the cytosol. The enzyme catalyses dCTP + H2O = dCMP + diphosphate + H(+). With respect to regulation, inhibited by the reaction end product PPi. Inhibited by dCDP. Inhibited by triptolide. Hydrolyzes deoxynucleoside triphosphates (dNTPs) to the corresponding nucleoside monophosphates. Has a strong preference for dCTP and its analogs including 5-iodo-dCTP and 5-methyl-dCTP for which it may even have a higher efficiency. May protect DNA or RNA against the incorporation of these genotoxic nucleotide analogs through their catabolism. This Homo sapiens (Human) protein is dCTP pyrophosphatase 1.